The following is a 248-amino-acid chain: UPF0246 protein RC0754 (248 aa).

The protein belongs to the UPF0246 family.

The protein is UPF0246 protein RC0754 of Rickettsia conorii (strain ATCC VR-613 / Malish 7).